The following is a 156-amino-acid chain: MPRRREVPKREVLPDPKFGNVDVAKFMNMLMLSGKKSVAERIVYGAFEQIQTKGGKDPLEVFTVALNNVKPVVEVKSRRVGGANYQVPVEVRPSRRMALAMRWLREAAKKRSEKSMALRLAGELSEAAEGRGGAMKKRDEVHRMAEANRAFSHFRF.

This sequence belongs to the universal ribosomal protein uS7 family. In terms of assembly, part of the 30S ribosomal subunit. Contacts proteins S9 and S11.

One of the primary rRNA binding proteins, it binds directly to 16S rRNA where it nucleates assembly of the head domain of the 30S subunit. Is located at the subunit interface close to the decoding center, probably blocks exit of the E-site tRNA. This is Small ribosomal subunit protein uS7 from Burkholderia ambifaria (strain MC40-6).